We begin with the raw amino-acid sequence, 369 residues long: Glycolate oxidase 1 (369 aa).

The 360-residue stretch at 1–360 (MGEITNVMEY…TRKHIITESD (360 aa)) folds into the FMN hydroxy acid dehydrogenase domain. Tyrosine 25 contributes to the glyoxylate binding site. FMN contacts are provided by residues 78–80 (PTA), serine 107, 128–130 (QLY), and threonine 156. Position 130 (tyrosine 130) interacts with glyoxylate. Arginine 165 contributes to the glyoxylate binding site. The FMN site is built by lysine 231 and serine 253. Residues histidine 255 and arginine 258 each coordinate glyoxylate. Histidine 255 acts as the Proton acceptor in catalysis. FMN-binding positions include 286-290 (DGGVR) and 309-310 (GR).

It belongs to the FMN-dependent alpha-hydroxy acid dehydrogenase family. Homotetramer. FMN serves as cofactor.

It localises to the peroxisome. It catalyses the reaction glycolate + O2 = glyoxylate + H2O2. It participates in photosynthesis; photorespiration; glycine from 2-phosphoglycolate: step 2/3. In terms of biological role, catalyzes the oxidation of glycolate to glyoxylate, with a reduction of O2 to H2O2. Is an essential enzyme in photorespiration in plants. Photorespiration plays a vital role in C4 photosynthesis in Z.mays and is essential for maize seedling development and maintaining low (non-toxic) levels of glycolate. This is Glycolate oxidase 1 from Zea mays (Maize).